A 104-amino-acid polypeptide reads, in one-letter code: uncharacterized protein (104 aa).

The next 2 helical transmembrane spans lie at 45–65 (LYGIFSCFLLFYSLKDLIGVF) and 70–90 (LYLSILLLWLLVLLFCLAKGL).

It is found in the membrane. This is an uncharacterized protein from Saccharomyces cerevisiae (strain ATCC 204508 / S288c) (Baker's yeast).